Here is a 248-residue protein sequence, read N- to C-terminus: MKILLTNDDGVHSPGLAALIKKVSEVAEVVVVAPDREQSAVSHALTLHHPLRAARIRANVFSVEGTPTDCVNLGIHSLLSYRPDLVISGVNRGANIADDVTYSGTVAAALEATLMGIPAIAVSLVTRSAGEHFEAAAACAAKLAVTVHQKGLPRDTYLNVNVPDLPAESLLPPLITCQGKRSYEGTIVDKVDPRGRNYYWIGTTDLSFEDIPGTDYHAVSRGHVSISPLHIDLTNHASIETLKSWELP.

Positions 8, 9, 39, and 91 each coordinate a divalent metal cation.

It belongs to the SurE nucleotidase family. Requires a divalent metal cation as cofactor.

It localises to the cytoplasm. It carries out the reaction a ribonucleoside 5'-phosphate + H2O = a ribonucleoside + phosphate. Functionally, nucleotidase that shows phosphatase activity on nucleoside 5'-monophosphates. This chain is 5'-nucleotidase SurE, found in Geobacter sp. (strain M21).